Here is a 231-residue protein sequence, read N- to C-terminus: ATP synthase subunit a (231 aa).

A run of 5 helical transmembrane segments spans residues 14-34 (GFLK…VLAV), 78-98 (YLGF…CTVI), 107-127 (SLST…FFGI), 174-194 (MIIG…MTAL), and 196-216 (LLTG…YIAA).

The protein belongs to the ATPase A chain family. As to quaternary structure, F-type ATPases have 2 components, CF(1) - the catalytic core - and CF(0) - the membrane proton channel. CF(1) has five subunits: alpha(3), beta(3), gamma(1), delta(1), epsilon(1). CF(0) has three main subunits: a(1), b(2) and c(9-12). The alpha and beta chains form an alternating ring which encloses part of the gamma chain. CF(1) is attached to CF(0) by a central stalk formed by the gamma and epsilon chains, while a peripheral stalk is formed by the delta and b chains.

It is found in the cell inner membrane. In terms of biological role, key component of the proton channel; it plays a direct role in the translocation of protons across the membrane. The polypeptide is ATP synthase subunit a (Albidiferax ferrireducens (strain ATCC BAA-621 / DSM 15236 / T118) (Rhodoferax ferrireducens)).